The following is a 159-amino-acid chain: Small ribosomal subunit protein uS5c (159 aa).

An S5 DRBM domain is found at 17–80; that stretch reads WEERVVSVQR…TDGKKNVITV (64 aa).

Belongs to the universal ribosomal protein uS5 family. In terms of assembly, part of the 30S ribosomal subunit. Contacts protein S4.

The protein resides in the plastid. It is found in the chloroplast. With S4 and S12 plays an important role in translational accuracy. In Emiliania huxleyi (Coccolithophore), this protein is Small ribosomal subunit protein uS5c (rps5).